The following is a 266-amino-acid chain: 3-methyl-2-oxobutanoate hydroxymethyltransferase (266 aa).

Mg(2+) is bound by residues aspartate 45 and aspartate 84. 3-methyl-2-oxobutanoate contacts are provided by residues aspartate 45–serine 46, aspartate 84, and lysine 112. Glutamate 114 provides a ligand contact to Mg(2+). Residue glutamate 181 is the Proton acceptor of the active site.

The protein belongs to the PanB family. Homodecamer; pentamer of dimers. Mg(2+) is required as a cofactor.

Its subcellular location is the cytoplasm. The catalysed reaction is 3-methyl-2-oxobutanoate + (6R)-5,10-methylene-5,6,7,8-tetrahydrofolate + H2O = 2-dehydropantoate + (6S)-5,6,7,8-tetrahydrofolate. Its pathway is cofactor biosynthesis; (R)-pantothenate biosynthesis; (R)-pantoate from 3-methyl-2-oxobutanoate: step 1/2. In terms of biological role, catalyzes the reversible reaction in which hydroxymethyl group from 5,10-methylenetetrahydrofolate is transferred onto alpha-ketoisovalerate to form ketopantoate. This Pseudomonas syringae pv. tomato (strain ATCC BAA-871 / DC3000) protein is 3-methyl-2-oxobutanoate hydroxymethyltransferase.